Reading from the N-terminus, the 241-residue chain is Protocatechuate 3,4-dioxygenase beta chain (241 aa).

Fe cation-binding residues include Tyr109, Tyr148, His161, and His163.

It belongs to the intradiol ring-cleavage dioxygenase family. As to quaternary structure, the enzyme is an oligomer of 12 copies of the alpha and beta chains. The cofactor is Fe(3+).

It catalyses the reaction 3,4-dihydroxybenzoate + O2 = 3-carboxy-cis,cis-muconate + 2 H(+). The protein operates within aromatic compound metabolism; beta-ketoadipate pathway; 3-carboxy-cis,cis-muconate from 3,4-dihydroxybenzoate: step 1/1. Its function is as follows. Plays an essential role in the utilization of numerous aromatic and hydroaromatic compounds via the beta-ketoadipate pathway. This is Protocatechuate 3,4-dioxygenase beta chain (pcaH) from Acinetobacter baylyi (strain ATCC 33305 / BD413 / ADP1).